Consider the following 547-residue polypeptide: DNA ligase (547 aa).

Residue Glu-244 coordinates ATP. Lys-246 acts as the N6-AMP-lysine intermediate in catalysis. ATP-binding residues include Arg-251, Arg-266, Glu-295, Phe-334, Arg-405, and Lys-411.

The protein belongs to the ATP-dependent DNA ligase family. Mg(2+) is required as a cofactor.

It carries out the reaction ATP + (deoxyribonucleotide)n-3'-hydroxyl + 5'-phospho-(deoxyribonucleotide)m = (deoxyribonucleotide)n+m + AMP + diphosphate.. Its function is as follows. DNA ligase that seals nicks in double-stranded DNA during DNA replication, DNA recombination and DNA repair. This Methanospirillum hungatei JF-1 (strain ATCC 27890 / DSM 864 / NBRC 100397 / JF-1) protein is DNA ligase.